The sequence spans 336 residues: Serpentine receptor class gamma-9 (336 aa).

The next 7 membrane-spanning stretches (helical) occupy residues 30 to 50 (LLQA…LYVI), 64 to 84 (FVIY…DIFI), 111 to 131 (IYYP…IFLT), 152 to 172 (LSFI…NTII), 200 to 220 (FLFL…VIMF), 237 to 257 (LCLA…FEAL), and 271 to 291 (FLIQ…IMIF).

This sequence belongs to the nematode receptor-like protein srg family.

Its subcellular location is the membrane. This is Serpentine receptor class gamma-9 (srg-9) from Caenorhabditis elegans.